Consider the following 513-residue polypeptide: Cytochrome P450 monooxygenase orf3 (513 aa).

The chain crosses the membrane as a helical span at residues Leu11–Tyr31. Residues Asn211 and Asn351 are each glycosylated (N-linked (GlcNAc...) asparagine). A heme-binding site is contributed by Cys455.

It belongs to the cytochrome P450 family. Heme serves as cofactor.

The protein resides in the membrane. Its pathway is mycotoxin biosynthesis. Its function is as follows. Cytochrome P450 monooxygenase; part of the gene cluster that mediates the biosynthesis of brefeldin A (BFA), a protein transport inhibitor that shows antiviral, antifungal, and antitumor properties. The proposed biosynthesis of BFA involves formation of an acyclic polyketide chain that is differentially tailored throughout the backbone. The highly reducing polyketide synthase Bref-PKS is proposed to synthesize the precisely reduced octaketide precursor, which could then be directly offloaded by the thiohydrolase enzyme Bref-TH followed by a cytochrome P450 monooxygenase-mediated formation of the cyclopentane ring and macrocyclization to afford 7-deoxy BFA. Alternatively, the first ring annulation can also occur on the ACP-tethered intermediate before the thiohydrolase release and lactonization. The C7-hydroxylation by another cytochrome P450 monooxygenase is believed to be the final step in the process to obtain the final structure of BFA. In addition to the HRPKS Bref-PKS and the thiohydrolase Bref-TH, the brefeldin A biosynthesis cluster contains 4 cytochrome p450 monooxygenases (called orf3 to orf6), as well a the probable cluster-specific transcription regulator orf8. The sequence is that of Cytochrome P450 monooxygenase orf3 from Eupenicillium brefeldianum (Penicillium brefeldianum).